The chain runs to 282 residues: ATP phosphoribosyltransferase (282 aa).

It belongs to the ATP phosphoribosyltransferase family. Long subfamily. It depends on Mg(2+) as a cofactor.

The protein localises to the cytoplasm. It carries out the reaction 1-(5-phospho-beta-D-ribosyl)-ATP + diphosphate = 5-phospho-alpha-D-ribose 1-diphosphate + ATP. It functions in the pathway amino-acid biosynthesis; L-histidine biosynthesis; L-histidine from 5-phospho-alpha-D-ribose 1-diphosphate: step 1/9. With respect to regulation, feedback inhibited by histidine. Its function is as follows. Catalyzes the condensation of ATP and 5-phosphoribose 1-diphosphate to form N'-(5'-phosphoribosyl)-ATP (PR-ATP). Has a crucial role in the pathway because the rate of histidine biosynthesis seems to be controlled primarily by regulation of HisG enzymatic activity. The polypeptide is ATP phosphoribosyltransferase (Pyrobaculum neutrophilum (strain DSM 2338 / JCM 9278 / NBRC 100436 / V24Sta) (Thermoproteus neutrophilus)).